The chain runs to 330 residues: DNA-directed RNA polymerase subunit alpha (330 aa).

The tract at residues 1 to 237 is alpha N-terminal domain (alpha-NTD); sequence MYTEINEMLT…RQLHAFVDMK (237 aa). The segment at 251–330 is alpha C-terminal domain (alpha-CTD); it reads FDPVLLRSVD…ENWPPASLGE (80 aa).

The protein belongs to the RNA polymerase alpha chain family. As to quaternary structure, homodimer. The RNAP catalytic core consists of 2 alpha, 1 beta, 1 beta' and 1 omega subunit. When a sigma factor is associated with the core the holoenzyme is formed, which can initiate transcription.

The catalysed reaction is RNA(n) + a ribonucleoside 5'-triphosphate = RNA(n+1) + diphosphate. Its function is as follows. DNA-dependent RNA polymerase catalyzes the transcription of DNA into RNA using the four ribonucleoside triphosphates as substrates. The chain is DNA-directed RNA polymerase subunit alpha from Legionella pneumophila subsp. pneumophila (strain Philadelphia 1 / ATCC 33152 / DSM 7513).